The following is a 154-amino-acid chain: Transcription antitermination protein NusB (154 aa).

It belongs to the NusB family.

Its function is as follows. Involved in transcription antitermination. Required for transcription of ribosomal RNA (rRNA) genes. Binds specifically to the boxA antiterminator sequence of the ribosomal RNA (rrn) operons. This is Transcription antitermination protein NusB from Hyphomonas neptunium (strain ATCC 15444).